We begin with the raw amino-acid sequence, 197 residues long: dTTP/UTP pyrophosphatase (197 aa).

Asp70 (proton acceptor) is an active-site residue.

The protein belongs to the Maf family. YhdE subfamily. The cofactor is a divalent metal cation.

It localises to the cytoplasm. It catalyses the reaction dTTP + H2O = dTMP + diphosphate + H(+). The catalysed reaction is UTP + H2O = UMP + diphosphate + H(+). In terms of biological role, nucleoside triphosphate pyrophosphatase that hydrolyzes dTTP and UTP. May have a dual role in cell division arrest and in preventing the incorporation of modified nucleotides into cellular nucleic acids. This Salmonella choleraesuis (strain SC-B67) protein is dTTP/UTP pyrophosphatase (yceF2).